A 32-amino-acid chain; its full sequence is Snake venom serine proteinase (32 aa).

Residues 1–32 form the Peptidase S1 domain; the sequence is VIGGDECDINEHRFLVFLTXASGLACGGTLIN.

It belongs to the peptidase S1 family. Snake venom subfamily. Monomer. Post-translationally, contains 6 disulfide bonds. In terms of processing, glycosylated. As to expression, expressed by the venom gland.

It is found in the secreted. Cleaves a kininogen analog with the release of kallidin (lysyl-bradykinin). Completely cleaves fibrinogen Aalpha chain, partially cleaves Bbeta chain and has no activity on gamma chain. This is Snake venom serine proteinase from Bitis arietans (African puff adder).